The following is a 156-amino-acid chain: Type II secretion system core protein G (156 aa).

Residues 1 to 22 (MQQSQRGCGQNSYGQSGYRQRG) constitute a propeptide, leader sequence. At Phe-23 the chain carries N-methylphenylalanine. The helical transmembrane segment at 23–43 (FTLLEIMVVIVILGVLASLVV) threads the bilayer.

The protein belongs to the GSP G family. In terms of assembly, type II secretion system is composed of four main components: the outer membrane complex, the inner membrane complex, the cytoplasmic secretion ATPase and the periplasm-spanning pseudopilus. Forms homomultimers. Post-translationally, cleaved by the prepilin peptidase. In terms of processing, methylated by prepilin peptidase at the amino group of the N-terminal phenylalanine once the leader sequence is cleaved.

The protein resides in the cell inner membrane. In terms of biological role, core component of the type II secretion system required for the energy-dependent secretion of extracellular factors such as proteases and toxins from the periplasm. Pseudopilin (pilin-like) protein that polymerizes to form the pseudopilus. Further polymerization triggers pseudopilus growth. This chain is Type II secretion system core protein G (outG), found in Pectobacterium carotovorum subsp. carotovorum (Erwinia carotovora subsp. carotovora).